The sequence spans 72 residues: Translation initiation factor IF-1 (72 aa).

In terms of domain architecture, S1-like spans 1 to 72 (MAKDDVIQMQ…SRARIVFRTK (72 aa)).

It belongs to the IF-1 family. In terms of assembly, component of the 30S ribosomal translation pre-initiation complex which assembles on the 30S ribosome in the order IF-2 and IF-3, IF-1 and N-formylmethionyl-tRNA(fMet); mRNA recruitment can occur at any time during PIC assembly.

Its subcellular location is the cytoplasm. One of the essential components for the initiation of protein synthesis. Stabilizes the binding of IF-2 and IF-3 on the 30S subunit to which N-formylmethionyl-tRNA(fMet) subsequently binds. Helps modulate mRNA selection, yielding the 30S pre-initiation complex (PIC). Upon addition of the 50S ribosomal subunit IF-1, IF-2 and IF-3 are released leaving the mature 70S translation initiation complex. In Herminiimonas arsenicoxydans, this protein is Translation initiation factor IF-1.